Here is an 85-residue protein sequence, read N- to C-terminus: Cell division topological specificity factor (85 aa).

The protein belongs to the MinE family.

In terms of biological role, prevents the cell division inhibition by proteins MinC and MinD at internal division sites while permitting inhibition at polar sites. This ensures cell division at the proper site by restricting the formation of a division septum at the midpoint of the long axis of the cell. This is Cell division topological specificity factor from Deinococcus geothermalis (strain DSM 11300 / CIP 105573 / AG-3a).